A 413-amino-acid chain; its full sequence is Putative F-box protein At3g58820 (413 aa).

Residues 1 to 48 (MDGVSSLPNELLCHILSFLTTKEAALTSILSKRWRNLIAFVPNLYIDD) enclose the F-box domain.

This is Putative F-box protein At3g58820 from Arabidopsis thaliana (Mouse-ear cress).